Here is a 350-residue protein sequence, read N- to C-terminus: Succinylglutamate desuccinylase (350 aa).

Residues His71, Glu74, and His169 each contribute to the Zn(2+) site. Glu233 is a catalytic residue.

Belongs to the AspA/AstE family. Succinylglutamate desuccinylase subfamily. Zn(2+) is required as a cofactor.

It carries out the reaction N-succinyl-L-glutamate + H2O = L-glutamate + succinate. Its pathway is amino-acid degradation; L-arginine degradation via AST pathway; L-glutamate and succinate from L-arginine: step 5/5. Transforms N(2)-succinylglutamate into succinate and glutamate. This Pseudoalteromonas atlantica (strain T6c / ATCC BAA-1087) protein is Succinylglutamate desuccinylase.